The following is a 404-amino-acid chain: Multidrug resistance protein MdtG (404 aa).

A run of 11 helical transmembrane segments spans residues 19–39 (LGCF…PLYV), 56–76 (LVFS…GGLA), 90–110 (LGMA…QFLI), 113–133 (ALLG…ATQV), 144–164 (TLST…GLLA), 171–191 (PVFF…FFFI), 222–242 (LFVT…ILTL), 254–274 (IAFI…LSAP), 288–308 (ILIV…FVQT), 317–337 (FLLG…LVYN), and 376–396 (AVFC…WNSL).

This sequence belongs to the major facilitator superfamily. DHA1 family. MdtG (TC 2.A.1.2.20) subfamily.

It localises to the cell inner membrane. The sequence is that of Multidrug resistance protein MdtG from Salmonella arizonae (strain ATCC BAA-731 / CDC346-86 / RSK2980).